We begin with the raw amino-acid sequence, 53 residues long: Insulin (53 aa).

A propeptide spans 1–30 (c peptide); the sequence is DVEPLLGFLSPKSGQENEVDDFPYKGQGEL. A disulfide bridge connects residues Cys38 and Cys43.

The protein belongs to the insulin family. In terms of assembly, heterodimer of a B chain and an A chain linked by two disulfide bonds.

Its subcellular location is the secreted. Its function is as follows. Insulin decreases blood glucose concentration. It increases cell permeability to monosaccharides, amino acids and fatty acids. It accelerates glycolysis, the pentose phosphate cycle, and glycogen synthesis in liver. The protein is Insulin (ins) of Anguilla anguilla (European freshwater eel).